The primary structure comprises 328 residues: MELIVALGVIVFKVALVIAILLLLPLPLTWLERKIAGHMQQRMGPMRVGWHGLLQPVADGIKLLTKEDHIPAEADRFLFKLAPILALAPPFVVFAAIPFGESVSVLGNEITLYISNLNVALLFVFAVIGLEVYGVIFGGWAANSKYAVLGSLRTCAQMISYEIPMGFAVIGVVMLAQSMSLLDIVRAQTDVWNVVYQPIGFFVFFVAGLAEAQRIPFDLAEAEGDLGAGFHTEYSGIRFALFMVSEYVVMVLVSVLTVILFFGGWNGVLIPLPPLLWFLLKVAFFVYLFMWFRFTFPRYRYDQLMAIGWKVLLPLSLANIIISGVVFS.

8 consecutive transmembrane segments (helical) span residues 3–23 (LIVALGVIVFKVALVIAILLL), 77–97 (FLFKLAPILALAPPFVVFAAI), 119–139 (VALLFVFAVIGLEVYGVIFGG), 165–185 (MGFAVIGVVMLAQSMSLLDIV), 191–211 (VWNVVYQPIGFFVFFVAGLAE), 250–270 (MVLVSVLTVILFFGGWNGVLI), 272–292 (LPPLLWFLLKVAFFVYLFMWF), and 307–327 (IGWKVLLPLSLANIIISGVVF).

The protein belongs to the complex I subunit 1 family. NDH-1 is composed of 14 different subunits. Subunits NuoA, H, J, K, L, M, N constitute the membrane sector of the complex.

It localises to the cell inner membrane. The catalysed reaction is a quinone + NADH + 5 H(+)(in) = a quinol + NAD(+) + 4 H(+)(out). Its function is as follows. NDH-1 shuttles electrons from NADH, via FMN and iron-sulfur (Fe-S) centers, to quinones in the respiratory chain. The immediate electron acceptor for the enzyme in this species is believed to be ubiquinone. Couples the redox reaction to proton translocation (for every two electrons transferred, four hydrogen ions are translocated across the cytoplasmic membrane), and thus conserves the redox energy in a proton gradient. This subunit may bind ubiquinone. The sequence is that of NADH-quinone oxidoreductase subunit H 2 from Rhizobium meliloti (strain 1021) (Ensifer meliloti).